We begin with the raw amino-acid sequence, 290 residues long: Lysine export transcriptional regulatory protein LysG (290 aa).

The region spanning 1 to 57 (MNPIHLDTLLTIIDEGSFENASLALSISPSAVSQRIKALEKSVGRVLVSRTQPAVAT) is the HTH lysR-type domain. Positions 18-37 (FENASLALSISPSAVSQRIK) form a DNA-binding region, H-T-H motif.

The protein belongs to the LysR transcriptional regulatory family.

Functionally, positively regulates the expression of the exporter LysE. The polypeptide is Lysine export transcriptional regulatory protein LysG (lysG) (Corynebacterium efficiens (strain DSM 44549 / YS-314 / AJ 12310 / JCM 11189 / NBRC 100395)).